Consider the following 353-residue polypeptide: Tetraacyldisaccharide 4'-kinase (353 aa).

66–73 contributes to the ATP binding site; sequence TVGGTGKT.

It belongs to the LpxK family.

The enzyme catalyses a lipid A disaccharide + ATP = a lipid IVA + ADP + H(+). It participates in glycolipid biosynthesis; lipid IV(A) biosynthesis; lipid IV(A) from (3R)-3-hydroxytetradecanoyl-[acyl-carrier-protein] and UDP-N-acetyl-alpha-D-glucosamine: step 6/6. Functionally, transfers the gamma-phosphate of ATP to the 4'-position of a tetraacyldisaccharide 1-phosphate intermediate (termed DS-1-P) to form tetraacyldisaccharide 1,4'-bis-phosphate (lipid IVA). This is Tetraacyldisaccharide 4'-kinase from Geobacter sulfurreducens (strain ATCC 51573 / DSM 12127 / PCA).